A 292-amino-acid chain; its full sequence is 4-hydroxy-tetrahydrodipicolinate synthase (292 aa).

Residue Thr-45 coordinates pyruvate. The active-site Proton donor/acceptor is the Tyr-133. Lys-161 functions as the Schiff-base intermediate with substrate in the catalytic mechanism. Ile-203 lines the pyruvate pocket.

This sequence belongs to the DapA family. Homotetramer; dimer of dimers.

It is found in the cytoplasm. The catalysed reaction is L-aspartate 4-semialdehyde + pyruvate = (2S,4S)-4-hydroxy-2,3,4,5-tetrahydrodipicolinate + H2O + H(+). Its pathway is amino-acid biosynthesis; L-lysine biosynthesis via DAP pathway; (S)-tetrahydrodipicolinate from L-aspartate: step 3/4. Its function is as follows. Catalyzes the condensation of (S)-aspartate-beta-semialdehyde [(S)-ASA] and pyruvate to 4-hydroxy-tetrahydrodipicolinate (HTPA). This is 4-hydroxy-tetrahydrodipicolinate synthase from Shigella dysenteriae serotype 1 (strain Sd197).